We begin with the raw amino-acid sequence, 215 residues long: LexA repressor (215 aa).

A DNA-binding region (H-T-H motif) is located at residues 28–48 (RAEIAAELGFSSPNAAEEHLR). Catalysis depends on for autocatalytic cleavage activity residues Ser-133 and Lys-170.

Belongs to the peptidase S24 family. As to quaternary structure, homodimer.

The catalysed reaction is Hydrolysis of Ala-|-Gly bond in repressor LexA.. Functionally, represses a number of genes involved in the response to DNA damage (SOS response), including recA and lexA. In the presence of single-stranded DNA, RecA interacts with LexA causing an autocatalytic cleavage which disrupts the DNA-binding part of LexA, leading to derepression of the SOS regulon and eventually DNA repair. In Burkholderia thailandensis (strain ATCC 700388 / DSM 13276 / CCUG 48851 / CIP 106301 / E264), this protein is LexA repressor.